The chain runs to 206 residues: 3-isopropylmalate dehydratase small subunit (206 aa).

It belongs to the LeuD family. LeuD type 1 subfamily. In terms of assembly, heterodimer of LeuC and LeuD.

It carries out the reaction (2R,3S)-3-isopropylmalate = (2S)-2-isopropylmalate. It participates in amino-acid biosynthesis; L-leucine biosynthesis; L-leucine from 3-methyl-2-oxobutanoate: step 2/4. In terms of biological role, catalyzes the isomerization between 2-isopropylmalate and 3-isopropylmalate, via the formation of 2-isopropylmaleate. The polypeptide is 3-isopropylmalate dehydratase small subunit (Leptospira borgpetersenii serovar Hardjo-bovis (strain JB197)).